The sequence spans 253 residues: Aspartic acid-rich protein (253 aa).

A signal peptide spans 1–22; it reads MYLFIYIFFFFFFFFFFVIVQK. Positions 211–253 are disordered; it reads DDFDEEFDDDDDDDDDDDDDDDDDDKDDDLDGDDDGNNDDNDD.

The protein belongs to the nucleosome assembly protein (NAP) family.

The chain is Aspartic acid-rich protein from Plasmodium falciparum (isolate fcm17 / Senegal).